A 1388-amino-acid polypeptide reads, in one-letter code: MSRPPPTGKMPGAPEAVSGDGAGASRQRKLEALIRDPRSPINVESLLDGLNPLVLDLDFPALRKNKNIDNFLNRYEKIVKKIRGLQMKAEDYDVVKVIGRGAFGEVQLVRHKASQKVYAMKLLSKFEMIKRSDSAFFWEERDIMAFANSPWVVQLFCAFQDDKYLYMVMEYMPGGDLVNLMSNYDVPEKWAKFYTAEVVLALDAIHSMGLIHRDVKPDNMLLDKHGHLKLADFGTCMKMDETGMVHCDTAVGTPDYISPEVLKSQGGDGYYGRECDWWSVGVFLFEMLVGDTPFYADSLVGTYSKIMDHKNSLCFPEDAEISKHAKNLICAFLTDREVRLGRNGVEEIKQHPFFKNDQWNWDNIRETAAPVVPELSSDIDSSNFDDIEDDKGDVETFPIPKAFVGNQLPFIGFTYYRENLLLSDSPSCKENDSIQSRKNEESQEIQKKLYTLEEHLSTEIQAKEELEQKCKSVNTRLEKVAKELEEEITLRKNVESTLRQLEREKALLQHKNAEYQRKADHEADKKRNLENDVNSLKDQLEDLKKRNQNSQISTEKVNQLQRQLDETNALLRTESDTAARLRKTQAESSKQIQQLESNNRDLQDKNCLLETAKLKLEKEFINLQSVLESERRDRTHGSEIINDLQGRISGLEEDVKNGKILLAKVELEKRQLQERFTDLEKEKNNMEIDMTYQLKVIQQSLEQEETEHKATKARLADKNKIYESIEEAKSEAMKEMEKKLSEERTLKQKVENLLLEAEKRCSILDCDLKQSQQKINELLKQKDVLNEDVRNLTLKIEQETQKRCLTQNDLKMQTQQVNTLKMSEKQLKQENNHLLEMKMSLEKQNAELRKERQDADGQMKELQDQLEAEQYFSTLYKTQVRELKEECEEKTKLCKELQQKKQELQDERDSLAAQLEITLTKADSEQLARSIAEEQYSDLEKEKIMKELEIKEMMARHKQELTEKDATIASLEETNRTLTSDVANLANEKEELNNKLKEAQEQLSRLKDEEISAAAIKAQFEKQLLTERTLKTQAVNKLAEIMNRKEPVKRGNDTDVRRKEKENRKLHMELKSEREKLTQQMIKYQKELNEMQAQIAEESQIRIELQMTLDSKDSDIEQLRSQLQALHIGLDSSSIGSGPGDTEADDGFPESRLEGWLSLPVRNNTKKFGWVKKYVIVSSKKILFYDSEQDKEQSNPYMVLDIDKLFHVRPVTQTDVYRADAKEIPRIFQILYANEGESKKEQEFPVEPVGEKSNYICHKGHEFIPTLYHFPTNCEACMKPLWHMFKPPPALECRRCHIKCHKDHMDKKEEIIAPCKVYYDISSAKNLLLLANSTEEQQKWVSRLVKKIPKKPPAPDPFARSSPRTSMKIQQNQSIRRPSRQLAPNKPS.

Residues Met-1–Ala-24 form a disordered region. A Protein kinase domain is found at Tyr-92–Phe-354. Residues Ile-98–Val-106 and Lys-121 contribute to the ATP site. Asp-214 serves as the catalytic Proton acceptor. Positions Asp-357–Ser-425 constitute an AGC-kinase C-terminal domain. The interval Asn-363–Val-784 is interaction with PPP1R12A. Positions Pro-373 to Leu-420 are interaction with NPM1. Phosphothreonine; by ROCK2 is present on Thr-414. 2 coiled-coil regions span residues Asn-439 to Leu-1025 and Asp-1053 to Asp-1131. The REM-1 domain occupies Thr-497 to Thr-573. The segment covering Asn-512 to Glu-530 has biased composition (basic and acidic residues). Residues Asn-512–Asp-532 are disordered. Tyr-722 is subject to Phosphotyrosine; by SRC. Residues Thr-979 to Pro-1047 form the RhoBD domain. The RHOA binding stretch occupies residues Thr-979–Pro-1047. Position 1137 is a phosphoserine (Ser-1137). One can recognise a PH domain in the interval Glu-1150–Pro-1349. The residue at position 1212 (Thr-1212) is a Phosphothreonine. The Phorbol-ester/DAG-type zinc finger occupies Gly-1260–Cys-1315. Positions Val-1345–Ser-1388 are disordered. Ser-1362 and Ser-1374 each carry phosphoserine. Residues Ser-1362 to Arg-1376 show a composition bias toward polar residues.

The protein belongs to the protein kinase superfamily. AGC Ser/Thr protein kinase family. As to quaternary structure, homodimer. Interacts with IRS1. Interacts with RAF1. Interacts with RHOA (activated by GTP). Interacts with RHOB and RHOC. Interacts with PPP1R12A. Interacts with EP300. Interacts with CHORDC1. Interacts with BRCA2. Interacts with NPM1; this interaction enhances ROCK2 activity. Interacts with SORL1. Interacts with PJVK. Mg(2+) is required as a cofactor. Post-translationally, autophosphorylated. Phosphorylation at Tyr-722 reduces its binding to RHOA and is crucial for focal adhesion dynamics. Dephosphorylation by PTPN11 stimulates its RHOA binding activity. Cleaved by granzyme B during apoptosis. This leads to constitutive activation of the kinase and membrane blebbing. In terms of tissue distribution, highly expressed in whole brain and in cerebellum, and at lower levels in heart and lung. Detected at low levels in skeletal muscle, spleen, liver, kidney and pancreas.

The protein resides in the cytoplasm. It is found in the cell membrane. Its subcellular location is the nucleus. It localises to the cytoskeleton. The protein localises to the microtubule organizing center. The protein resides in the centrosome. The enzyme catalyses L-seryl-[protein] + ATP = O-phospho-L-seryl-[protein] + ADP + H(+). The catalysed reaction is L-threonyl-[protein] + ATP = O-phospho-L-threonyl-[protein] + ADP + H(+). Its activity is regulated as follows. Activated by RHOA binding. Inhibited by Y-27632. Its function is as follows. Protein kinase which is a key regulator of actin cytoskeleton and cell polarity. Involved in regulation of smooth muscle contraction, actin cytoskeleton organization, stress fiber and focal adhesion formation, neurite retraction, cell adhesion and motility via phosphorylation of ADD1, BRCA2, CNN1, EZR, DPYSL2, EP300, MSN, MYL9/MLC2, NPM1, RDX, PPP1R12A and VIM. Phosphorylates SORL1 and IRF4. Acts as a negative regulator of VEGF-induced angiogenic endothelial cell activation. Positively regulates the activation of p42/MAPK1-p44/MAPK3 and of p90RSK/RPS6KA1 during myogenic differentiation. Plays an important role in the timely initiation of centrosome duplication. Inhibits keratinocyte terminal differentiation. May regulate closure of the eyelids and ventral body wall through organization of actomyosin bundles. Plays a critical role in the regulation of spine and synaptic properties in the hippocampus. Plays an important role in generating the circadian rhythm of the aortic myofilament Ca(2+) sensitivity and vascular contractility by modulating the myosin light chain phosphorylation. The sequence is that of Rho-associated protein kinase 2 (ROCK2) from Bos taurus (Bovine).